A 237-amino-acid chain; its full sequence is GrpE protein homolog, mitochondrial (237 aa).

This sequence belongs to the GrpE family. In terms of assembly, probable component of the PAM complex at least composed of a mitochondrial HSP70 protein, GrpE, tim-44, tim-16 and tim-14/dnj-21.

It is found in the mitochondrion matrix. Functionally, essential component of the PAM complex, a complex required for the translocation of transit peptide-containing proteins from the inner membrane into the mitochondrial matrix in an ATP-dependent manner. Seems to control the nucleotide-dependent binding of mitochondrial HSP70 to substrate proteins. The polypeptide is GrpE protein homolog, mitochondrial (Caenorhabditis elegans).